A 364-amino-acid polypeptide reads, in one-letter code: F-box protein At1g59680 (364 aa).

Residues 2–49 (TTMSDLSVDLVGEILSRVPLTSLSAVRCTCKSWNTLSKHQIFGKAELA) form the F-box domain.

This chain is F-box protein At1g59680, found in Arabidopsis thaliana (Mouse-ear cress).